The sequence spans 1125 residues: MSQSSSLKRKQQPTISSFFGKTTSSSGESTNKKASLNGLGRAKQRIREEESNLSPSPEDKGEYLDDEDEDIVPPSRKRVKSSRISTDGANAAAKGNDDDLSQSPHRNVPASSRTERFRFQSSPVSSLDAEGSQVEGREAIDTERERKRKENLHQKFVRRLGGPGCLPSLEHGSNANTAMTEGGEDEDEALDEEDVAPPPSTKARGARKAASTKLTPLEKQVIDIKNKHKDAILVVEVGYKFRFFGEDARIAAKELSIVCIPGKLRFDEHPSEAHLNRFASASIPVHRLHVHVKRLVRAGHKVGVVRQLETAALKAAGDNRNAPFERKLTHLYTKGTYIDDTEELEGLNAVGANSAAPATGYLLCMTESNAKGWGNDEKVQVGILAVQPATGNIIHDSFEDGFMRTEIETRLLHIAPCEFLLIGDVSRATDKLVQHLSGSKMNVFGDKVRVERVSKSKTAAAESHSHVSSFYAGRMKATSTTQDERARDLLDKVLNLPEDVTICLSAMIKHLKEYNLENVFDLTKYFQPFSARSHMLLNGNTLINLEIYQNQTEQTSKGSLFWTLDRTKTRFGQRLLRKWVGRPLLDKQELEDRVAAVTELKDSDATPRVGRLKTLLSKVKTDLEKNLLRIYYGKCTRPELLTVLQTLQLIATEFSHVKSPADAGFDSPVINEAISQLPVVLDDVVSYLNKINLHSAKADDKFSFFQESEETDEITEQKLGIGSVEHDLEEYRNTAAEILCKKKVCYVTNAGIEYLIEVENSSLQMKKIPASWRKISGTKKVSRFHPPEVVNLMRERDQHKEALAAACDKAFLGLLADISTKYQPFRDCIQALATLDCFMSLAAVAAQPGYVRPTYADEARISVRGGRHPMVEQLLLDTYVPNDTELGTDGTRALLVTGPNMGGKSSYVRQVALISIMGQIGSYVPAESATLGMLDAVYTRMGAFDNMLAGESTFMVELSETSDILKQATPRSLVILDELGRGTSTHDGVAIAQAVLDYMVRDIRSLTLFITHYQHLSNLARTFPNGELRNVHMKFTESGKDGQDITFLYEVGEGVAHRSYGLNVARLANIPSSVLDVAYTKSAELEEKIKRKNLEGIAKGLSRVLENGENEGELMERLLSEVEQL.

The segment at 1–212 (MSQSSSLKRK…ARGARKAAST (212 aa)) is disordered. Over residues 16 to 33 (SSFFGKTTSSSGESTNKK) the composition is skewed to low complexity. The segment covering 101 to 112 (SQSPHRNVPASS) has biased composition (polar residues). Residues 135–145 (EGREAIDTERE) show a composition bias toward basic and acidic residues. Over residues 146-158 (RKRKENLHQKFVR) the composition is skewed to basic residues. Acidic residues predominate over residues 182–195 (GGEDEDEALDEEDV). A mispair-binding domain region spans residues 208–335 (KAASTKLTPL…RKLTHLYTKG (128 aa)). Residue 898–905 (GPNMGGKS) participates in ATP binding.

Belongs to the DNA mismatch repair MutS family. MSH3 subfamily. In terms of assembly, heterodimer consisting of MSH2-MSH3 (MutS beta). Forms a ternary complex with MutL alpha (MLH1-PMS1).

It is found in the nucleus. Functionally, component of the post-replicative DNA mismatch repair system (MMR). Heterodimerizes with MSH2 to form MutS beta, which binds to DNA mismatches thereby initiating DNA repair. MSH3 provides substrate-binding and substrate specificity to the complex. When bound, the MutS beta heterodimer bends the DNA helix and shields approximately 20 base pairs. Acts mainly to repair insertion-deletion loops (IDLs) from 2 to 13 nucleotides in size, but can also repair base-base and single insertion-deletion mismatches that occur during replication. After mismatch binding, forms a ternary complex with the MutL alpha heterodimer, which is thought to be responsible for directing the downstream MMR events, including strand discrimination, excision, and resynthesis. ATP binding and hydrolysis play a pivotal role in mismatch repair functions. This chain is DNA mismatch repair protein MSH3 (MSH3), found in Coccidioides immitis (strain RS) (Valley fever fungus).